The chain runs to 638 residues: Plasma kallikrein (638 aa).

An N-terminal signal peptide occupies residues 1 to 19; that stretch reads MILFKQATYFISLFATVSC. Apple domains lie at 21-104, 111-194, 201-284, and 292-375; these read CLTQ…LKQC, CHRD…LKPC, CHMN…LLTC, and CHSK…LRLC. Cystine bridges form between Cys21–Cys104, Cys47–Cys77, Cys51–Cys57, Cys111–Cys194, Cys137–Cys166, Cys141–Cys147, Cys201–Cys284, Cys227–Cys256, Cys231–Cys237, Cys292–Cys375, Cys318–Cys347, Cys322–Cys328, Cys340–Cys345, Cys383–Cys503, Cys419–Cys435, Cys517–Cys584, Cys548–Cys563, and Cys574–Cys602. The N-linked (GlcNAc...) asparagine glycan is linked to Asn127. N-linked (GlcNAc...) asparagine glycosylation is present at Asn308. Positions 391 to 626 constitute a Peptidase S1 domain; that stretch reads IVGGTNSSWG…YMDWILEKTQ (236 aa). Asn396 is a glycosylation site (N-linked (GlcNAc...) asparagine). The Charge relay system role is filled by His434. N-linked (GlcNAc...) asparagine glycosylation is present at Asn453. Asp483 serves as the catalytic Charge relay system. Asn494 carries N-linked (GlcNAc...) asparagine glycosylation. Ser578 functions as the Charge relay system in the catalytic mechanism.

Belongs to the peptidase S1 family. Plasma kallikrein subfamily. In terms of assembly, forms a heterodimer with SERPINA5. The zymogen is activated by factor XIIa, which cleaves the molecule into a light chain, which contains the active site, and a heavy chain, which associates with HMW kininogen. These chains are linked by one or more disulfide bonds. Interacts with iripin-3, a serine protease inhibitor from Ixodes ricinus saliva. Interacts with iripin-1, a serine protease inhibitor from Ixodes ricinus saliva. As to expression, found in plasma (at protein level).

The protein localises to the secreted. It catalyses the reaction Cleaves selectively Arg-|-Xaa and Lys-|-Xaa bonds, including Lys-|-Arg and Arg-|-Ser bonds in (human) kininogen to release bradykinin.. With respect to regulation, inhibited by SERPINA5. Functionally, participates in the surface-dependent activation of blood coagulation. Activates, in a reciprocal reaction, coagulation factor XII/F12 after binding to negatively charged surfaces. Releases bradykinin from HMW kininogen and may also play a role in the renin-angiotensin system by converting prorenin into renin. The sequence is that of Plasma kallikrein (KLKB1) from Homo sapiens (Human).